Consider the following 450-residue polypeptide: Bifunctional protein GlmU (450 aa).

Residues 1 to 229 (MGVALIVLAA…EAETLGINTR (229 aa)) are pyrophosphorylase. UDP-N-acetyl-alpha-D-glucosamine contacts are provided by residues 8 to 11 (LAAG), Lys22, Gln75, 80 to 81 (GT), 103 to 105 (YGD), Gly141, Glu155, Asn170, and Asn227. Position 105 (Asp105) interacts with Mg(2+). Position 227 (Asn227) interacts with Mg(2+). Residues 230-250 (TELAAAEQAFQARARARALED) are linker. An N-acetyltransferase region spans residues 251–450 (GVTLADPATT…RARKSAKGAQ (200 aa)). UDP-N-acetyl-alpha-D-glucosamine-binding residues include Arg316 and Lys334. His346 serves as the catalytic Proton acceptor. Residues Tyr349 and Asn360 each contribute to the UDP-N-acetyl-alpha-D-glucosamine site. Residues Ala363, 369 to 370 (NY), Ser388, Thr406, and Arg423 contribute to the acetyl-CoA site.

This sequence in the N-terminal section; belongs to the N-acetylglucosamine-1-phosphate uridyltransferase family. It in the C-terminal section; belongs to the transferase hexapeptide repeat family. Homotrimer. The cofactor is Mg(2+).

The protein resides in the cytoplasm. It carries out the reaction alpha-D-glucosamine 1-phosphate + acetyl-CoA = N-acetyl-alpha-D-glucosamine 1-phosphate + CoA + H(+). The enzyme catalyses N-acetyl-alpha-D-glucosamine 1-phosphate + UTP + H(+) = UDP-N-acetyl-alpha-D-glucosamine + diphosphate. It participates in nucleotide-sugar biosynthesis; UDP-N-acetyl-alpha-D-glucosamine biosynthesis; N-acetyl-alpha-D-glucosamine 1-phosphate from alpha-D-glucosamine 6-phosphate (route II): step 2/2. It functions in the pathway nucleotide-sugar biosynthesis; UDP-N-acetyl-alpha-D-glucosamine biosynthesis; UDP-N-acetyl-alpha-D-glucosamine from N-acetyl-alpha-D-glucosamine 1-phosphate: step 1/1. Its pathway is bacterial outer membrane biogenesis; LPS lipid A biosynthesis. In terms of biological role, catalyzes the last two sequential reactions in the de novo biosynthetic pathway for UDP-N-acetylglucosamine (UDP-GlcNAc). The C-terminal domain catalyzes the transfer of acetyl group from acetyl coenzyme A to glucosamine-1-phosphate (GlcN-1-P) to produce N-acetylglucosamine-1-phosphate (GlcNAc-1-P), which is converted into UDP-GlcNAc by the transfer of uridine 5-monophosphate (from uridine 5-triphosphate), a reaction catalyzed by the N-terminal domain. The protein is Bifunctional protein GlmU of Dinoroseobacter shibae (strain DSM 16493 / NCIMB 14021 / DFL 12).